Reading from the N-terminus, the 301-residue chain is Outer membrane porin G (301 aa).

The N-terminal stretch at 1–21 (MKKLLPCTALVMCAGMACAQA) is a signal peptide. 16 consecutive transmembrane segments (beta stranded) span residues 27–35 (WHFNIGAMY), 47–57 (MDGLAEPSVYF), 64–72 (WRIALAYYQ), 89–98 (RPELEVHYQF), 104–112 (FSFGLTGGF), 129–136 (NMQRWKIA), 149–158 (FNGWLSMYKF), 172–182 (VETETGLQYTF), 186–195 (VALRVNYYLE), 201–209 (DDSRNNGEF), 213–222 (EIRAYLPLTL), 230–238 (YTRIGLDRW), 240–248 (NWDWQDDIE), 254–265 (FNRVGLFYGYDF), 269–279 (LSVSLEYAFEW), and 289–300 (KFHYAGVGVNYS).

As to quaternary structure, monomer.

The protein localises to the cell outer membrane. Functionally, forms channels functionally larger than those of classical porins. In terms of biological role, may act as a regulator of the RCS-phosphorelay signal transduction pathway. The chain is Outer membrane porin G (ompG) from Escherichia coli (strain K12).